Consider the following 174-residue polypeptide: Eukaryotic translation elongation factor 1 epsilon-1 (174 aa).

At alanine 2 the chain carries N-acetylalanine. Residues 2–56 form an N-terminal region; that stretch reads AAAAELRLLEKSLGLKPGNKYSAQGERQIPVLQTNNGPSLMGLSTIATHLVKQAS. Residues 50–173 enclose the GST C-terminal domain; sequence HLVKQASKEH…FIKNRLYANS (124 aa). A linker region spans residues 57–63; sequence KEHLLGS. A C-terminal region spans residues 64-152; sequence TAEEKAMVQQ…SRWFCHIQHY (89 aa). Lysine 138 is subject to N6-acetyllysine. Residues 153–169 adopt a coiled-coil conformation; that stretch reads PDIRQHLSSIVFIKNRL.

In terms of assembly, part of a multisubunit complex that groups tRNA ligases for Arg (RARS1), Asp (DARS1), Gln (QARS1), Ile (IARS1), Leu (LARS1), Lys (KARS1), Met (MARS1) the bifunctional ligase for Glu and Pro (EPRS1) and the auxiliary subunits AIMP1/p43, AIMP2/p38 and EEF1E1/p18. Can interact simultaneously with MARS1 and EPRS1. Forms a linear complex that contains MARS1, EEF1E1, EPRS1 and AIMP2 that is at the core of the multisubunit complex. Interacts with ATM and ATR. The interaction with ATM, which takes place independently of TP53, is induced by DNA damage that may occur during genotoxic stress or cell growth. The interaction with ATR is enhanced by UV irradiation.

The protein resides in the cytoplasm. It is found in the nucleus. Its function is as follows. Positive modulator of ATM response to DNA damage. The chain is Eukaryotic translation elongation factor 1 epsilon-1 (Eef1e1) from Mus musculus (Mouse).